The following is a 272-amino-acid chain: Tryptophan synthase alpha chain (272 aa).

Residues E53 and D64 each act as proton acceptor in the active site.

The protein belongs to the TrpA family. In terms of assembly, tetramer of two alpha and two beta chains.

It carries out the reaction (1S,2R)-1-C-(indol-3-yl)glycerol 3-phosphate + L-serine = D-glyceraldehyde 3-phosphate + L-tryptophan + H2O. Its pathway is amino-acid biosynthesis; L-tryptophan biosynthesis; L-tryptophan from chorismate: step 5/5. In terms of biological role, the alpha subunit is responsible for the aldol cleavage of indoleglycerol phosphate to indole and glyceraldehyde 3-phosphate. The chain is Tryptophan synthase alpha chain from Xanthomonas campestris pv. campestris (strain 8004).